Here is a 257-residue protein sequence, read N- to C-terminus: Probable S-adenosylmethionine-dependent methyltransferase MSMEG_2350/MSMEI_2290 (257 aa).

The protein belongs to the methyltransferase superfamily.

Probable S-adenosylmethionine-dependent methyltransferase required for the 6-O-methylation of the polysaccharide backbone of 6-O-methylglucosyl lipopolysaccharides (MGLP). The polypeptide is Probable S-adenosylmethionine-dependent methyltransferase MSMEG_2350/MSMEI_2290 (Mycolicibacterium smegmatis (strain ATCC 700084 / mc(2)155) (Mycobacterium smegmatis)).